The primary structure comprises 288 residues: uncharacterized protein (288 aa).

Disordered regions lie at residues 31-52 and 179-288; these read KAVD…EAPS and YPSK…VELK. The span at 206-217 shows a compositional bias: polar residues; that stretch reads RPSSPTNFSKLI. Positions 221-236 are enriched in basic and acidic residues; sequence YKDEWLQQQADSDKRA. Low complexity-rich tracts occupy residues 237–249 and 267–276; these read PQTP…SPSP and AAESSPLSSA.

This is an uncharacterized protein from Bos taurus (Bovine).